The chain runs to 590 residues: Acetolactate synthase large subunit (590 aa).

Glutamate 61 contributes to the thiamine diphosphate binding site. Residues arginine 163, 271-292, and 314-333 contribute to the FAD site; these read HGTAYANFAVSECDLLIALGAR and DIDPAEVGKNRIPQVAIVGD. The thiamine pyrophosphate binding stretch occupies residues 405–484; sequence QHQMWSAQFL…VKIIIINNRW (80 aa). Residues aspartate 455 and asparagine 482 each contribute to the Mg(2+) site.

Belongs to the TPP enzyme family. In terms of assembly, dimer of large and small chains. Requires Mg(2+) as cofactor. Thiamine diphosphate is required as a cofactor.

It is found in the plastid. Its subcellular location is the chloroplast. The enzyme catalyses 2 pyruvate + H(+) = (2S)-2-acetolactate + CO2. It participates in amino-acid biosynthesis; L-isoleucine biosynthesis; L-isoleucine from 2-oxobutanoate: step 1/4. It functions in the pathway amino-acid biosynthesis; L-valine biosynthesis; L-valine from pyruvate: step 1/4. The chain is Acetolactate synthase large subunit (ilvB) from Pyropia yezoensis (Susabi-nori).